The sequence spans 363 residues: Sulfate/thiosulfate import ATP-binding protein CysA (363 aa).

The ABC transporter domain occupies 3–237 (IEINNISKYF…PATRFVLEFL (235 aa)). Residue 35–42 (GPSGSGKT) participates in ATP binding.

The protein belongs to the ABC transporter superfamily. Sulfate/tungstate importer (TC 3.A.1.6) family. As to quaternary structure, the complex is composed of two ATP-binding proteins (CysA), two transmembrane proteins (CysT and CysW) and a solute-binding protein (CysP).

The protein resides in the cell inner membrane. The catalysed reaction is sulfate(out) + ATP + H2O = sulfate(in) + ADP + phosphate + H(+). It catalyses the reaction thiosulfate(out) + ATP + H2O = thiosulfate(in) + ADP + phosphate + H(+). Functionally, part of the ABC transporter complex CysAWTP involved in sulfate/thiosulfate import. Responsible for energy coupling to the transport system. This Yersinia pestis protein is Sulfate/thiosulfate import ATP-binding protein CysA.